A 620-amino-acid chain; its full sequence is 1-deoxy-D-xylulose-5-phosphate synthase (620 aa).

Thiamine diphosphate is bound by residues His-80 and 121 to 123 (GHS). Position 152 (Asp-152) interacts with Mg(2+). Thiamine diphosphate contacts are provided by residues 153 to 154 (GA), Asn-181, Tyr-288, and Glu-370. A Mg(2+)-binding site is contributed by Asn-181.

Belongs to the transketolase family. DXPS subfamily. In terms of assembly, homodimer. Mg(2+) is required as a cofactor. The cofactor is thiamine diphosphate.

It carries out the reaction D-glyceraldehyde 3-phosphate + pyruvate + H(+) = 1-deoxy-D-xylulose 5-phosphate + CO2. The protein operates within metabolic intermediate biosynthesis; 1-deoxy-D-xylulose 5-phosphate biosynthesis; 1-deoxy-D-xylulose 5-phosphate from D-glyceraldehyde 3-phosphate and pyruvate: step 1/1. In terms of biological role, catalyzes the acyloin condensation reaction between C atoms 2 and 3 of pyruvate and glyceraldehyde 3-phosphate to yield 1-deoxy-D-xylulose-5-phosphate (DXP). This chain is 1-deoxy-D-xylulose-5-phosphate synthase, found in Shigella dysenteriae serotype 1 (strain Sd197).